The primary structure comprises 274 residues: 3-methyl-2-oxobutanoate hydroxymethyltransferase (274 aa).

Asp-44 and Asp-83 together coordinate Mg(2+). Residues Asp-44–Ser-45, Asp-83, and Lys-113 each bind 3-methyl-2-oxobutanoate. Glu-115 contributes to the Mg(2+) binding site. Glu-182 (proton acceptor) is an active-site residue.

The protein belongs to the PanB family. As to quaternary structure, homodecamer; pentamer of dimers. Mg(2+) is required as a cofactor.

It is found in the cytoplasm. It catalyses the reaction 3-methyl-2-oxobutanoate + (6R)-5,10-methylene-5,6,7,8-tetrahydrofolate + H2O = 2-dehydropantoate + (6S)-5,6,7,8-tetrahydrofolate. Its pathway is cofactor biosynthesis; (R)-pantothenate biosynthesis; (R)-pantoate from 3-methyl-2-oxobutanoate: step 1/2. Catalyzes the reversible reaction in which hydroxymethyl group from 5,10-methylenetetrahydrofolate is transferred onto alpha-ketoisovalerate to form ketopantoate. The chain is 3-methyl-2-oxobutanoate hydroxymethyltransferase from Campylobacter jejuni subsp. jejuni serotype O:6 (strain 81116 / NCTC 11828).